The chain runs to 192 residues: Orotate phosphoribosyltransferase (192 aa).

116–124 (EDIVTTGLS) contributes to the 5-phospho-alpha-D-ribose 1-diphosphate binding site. Positions 120 and 148 each coordinate orotate.

The protein belongs to the purine/pyrimidine phosphoribosyltransferase family. PyrE subfamily. As to quaternary structure, homodimer. Mg(2+) is required as a cofactor.

It carries out the reaction orotidine 5'-phosphate + diphosphate = orotate + 5-phospho-alpha-D-ribose 1-diphosphate. It functions in the pathway pyrimidine metabolism; UMP biosynthesis via de novo pathway; UMP from orotate: step 1/2. Catalyzes the transfer of a ribosyl phosphate group from 5-phosphoribose 1-diphosphate to orotate, leading to the formation of orotidine monophosphate (OMP). The protein is Orotate phosphoribosyltransferase of Brucella anthropi (strain ATCC 49188 / DSM 6882 / CCUG 24695 / JCM 21032 / LMG 3331 / NBRC 15819 / NCTC 12168 / Alc 37) (Ochrobactrum anthropi).